Here is a 359-residue protein sequence, read N- to C-terminus: Guanine nucleotide-binding protein subunit alpha-11 (359 aa).

Residues Cys-9 and Cys-10 are each lipidated (S-palmitoyl cysteine). The 322-residue stretch at Arg-38–Val-359 folds into the G-alpha domain. Residues Lys-41 to Thr-54 are G1 motif. GTP-binding positions include Gly-46–Ser-53 and Leu-180–Arg-183. Ser-53 contacts Mg(2+). Positions Asp-178–Thr-186 are G2 motif. Thr-186 contributes to the Mg(2+) binding site. The G3 motif stretch occupies residues Phe-201–Arg-210. Residues Ile-270–Asp-277 form a G4 motif region. GTP is bound by residues Asn-274–Asp-277 and Ala-331. Positions Thr-329 to Thr-334 are G5 motif.

It belongs to the G-alpha family. G(q) subfamily. G proteins are composed of 3 units; alpha, beta and gamma. The alpha chain contains the guanine nucleotide binding site.

It is found in the cell membrane. It localises to the cytoplasm. It carries out the reaction GTP + H2O = GDP + phosphate + H(+). Guanine nucleotide-binding proteins (G proteins) function as transducers downstream of G protein-coupled receptors (GPCRs) in numerous signaling cascades. The alpha chain contains the guanine nucleotide binding site and alternates between an active, GTP-bound state and an inactive, GDP-bound state. Signaling by an activated GPCR promotes GDP release and GTP binding. The alpha subunit has a low GTPase activity that converts bound GTP to GDP, thereby terminating the signal. Both GDP release and GTP hydrolysis are modulated by numerous regulatory proteins. Signaling is mediated via phospholipase C-beta-dependent inositol lipid hydrolysis for signal propagation: activates phospholipase C-beta: following GPCR activation, GNA11 activates PLC-beta (PLCB1, PLCB2, PLCB3 or PLCB4), leading to production of diacylglycerol (DAG) and inositol 1,4,5-trisphosphate (IP3). This is Guanine nucleotide-binding protein subunit alpha-11 (gna11) from Xenopus laevis (African clawed frog).